The chain runs to 467 residues: Glutamate--tRNA ligase (467 aa).

The short motif at proline 9–glycine 19 is the 'HIGH' region element. Residues lysine 237–arginine 241 carry the 'KMSKS' region motif. Residue lysine 240 participates in ATP binding.

It belongs to the class-I aminoacyl-tRNA synthetase family. Glutamate--tRNA ligase type 1 subfamily. Monomer.

It localises to the cytoplasm. It carries out the reaction tRNA(Glu) + L-glutamate + ATP = L-glutamyl-tRNA(Glu) + AMP + diphosphate. Functionally, catalyzes the attachment of glutamate to tRNA(Glu) in a two-step reaction: glutamate is first activated by ATP to form Glu-AMP and then transferred to the acceptor end of tRNA(Glu). This is Glutamate--tRNA ligase from Stenotrophomonas maltophilia (strain R551-3).